A 184-amino-acid polypeptide reads, in one-letter code: Translocon-associated protein subunit beta (184 aa).

Positions 1-20 (MNFKTVISLFLVLFVSFVYC) are cleaved as a signal peptide. Over 21–147 (ENGAELLFHK…SQADYEKRTS (127 aa)) the chain is Lumenal. The N-linked (GlcNAc...) asparagine glycan is linked to asparagine 94. The chain crosses the membrane as a helical span at residues 148–168 (LLIKEWITFFVLCAGAIALPY). The Cytoplasmic portion of the chain corresponds to 169 to 184 (SISTYYKKNYENGIKK).

This sequence belongs to the TRAP-beta family. As to quaternary structure, heterotrimer of TRAP-alpha, TRAP-beta and TRAP-gamma.

Its subcellular location is the endoplasmic reticulum membrane. Its function is as follows. TRAP proteins are part of a complex whose function is to bind calcium to the ER membrane and thereby regulate the retention of ER resident proteins. This is Translocon-associated protein subunit beta (ssr2) from Dictyostelium discoideum (Social amoeba).